The primary structure comprises 280 residues: Shikimate dehydrogenase (NADP(+)) (280 aa).

Shikimate is bound by residues S19–S21 and T66. The active-site Proton acceptor is K70. NADP(+) is bound at residue E82. Residues N91 and D106 each contribute to the shikimate site. Residues G130–A134 and L222 contribute to the NADP(+) site. A shikimate-binding site is contributed by Y224. G245 serves as a coordination point for NADP(+).

The protein belongs to the shikimate dehydrogenase family. Homodimer.

The catalysed reaction is shikimate + NADP(+) = 3-dehydroshikimate + NADPH + H(+). It functions in the pathway metabolic intermediate biosynthesis; chorismate biosynthesis; chorismate from D-erythrose 4-phosphate and phosphoenolpyruvate: step 4/7. Its function is as follows. Involved in the biosynthesis of the chorismate, which leads to the biosynthesis of aromatic amino acids. Catalyzes the reversible NADPH linked reduction of 3-dehydroshikimate (DHSA) to yield shikimate (SA). The chain is Shikimate dehydrogenase (NADP(+)) from Methanococcus maripaludis (strain C7 / ATCC BAA-1331).